We begin with the raw amino-acid sequence, 729 residues long: Golgin subfamily A member 5 (729 aa).

An N-acetylserine modification is found at Ser2. The Cytoplasmic segment spans residues 2–696; sequence SWFADLAGRA…IFLRRYPIAR (695 aa). A dimethylated arginine mark is found at Arg27 and Arg89. 2 disordered regions span residues 89-222 and 626-645; these read RTVG…SQEL and SASS…VDSG. The residue at position 116 (Ser116) is a Phosphoserine. Residues 134-146 are compositionally biased toward basic and acidic residues; it reads PTGRVEVKKEKGR. The span at 148–167 shows a compositional bias: low complexity; it reads PVSPSSPSGVSSVNTSVTTT. Polar residues-rich tracts occupy residues 175–186 and 626–638; these read GSQSPGVNSSDS and SASS…SAIN. The stretch at 215–629 forms a coiled coil; sequence GSSRSQELSN…LEQQVHSASS (415 aa). A helical; Anchor for type IV membrane protein transmembrane segment spans residues 697-717; that stretch reads VFVIIYMALLHLWVMIVLLTY. The Lumenal portion of the chain corresponds to 718–729; the sequence is SPEMHHDQPYGK.

As to quaternary structure, homodimer. Interacts with RAB1A that has been activated by GTP-binding. Interacts with isoform CASP of CUX1. Highly phosphorylated during mitosis. Phosphorylation is barely detectable during interphase.

It localises to the golgi apparatus membrane. Involved in maintaining Golgi structure. Stimulates the formation of Golgi stacks and ribbons. Involved in intra-Golgi retrograde transport. This chain is Golgin subfamily A member 5 (Golga5), found in Mus musculus (Mouse).